The sequence spans 513 residues: Fumarate reductase (513 aa).

41–55 (AIVIGGGLAGLSATN) contacts FAD. Phosphoserine is present on Ser100. Residues His288 and Arg311 contribute to the active site.

Belongs to the FAD-dependent oxidoreductase 2 family. FRD/SDH subfamily. The cofactor is FAD.

The protein resides in the cytoplasm. Its subcellular location is the mitochondrion. It localises to the nucleus. The enzyme catalyses succinate + NAD(+) = fumarate + NADH + H(+). Its function is as follows. Irreversibly catalyzes the reduction of fumarate to succinate. The polypeptide is Fumarate reductase (osm1) (Schizosaccharomyces pombe (strain 972 / ATCC 24843) (Fission yeast)).